Consider the following 89-residue polypeptide: Envelope protein US9 (89 aa).

The span at 1–10 (MTSRPADQDS) shows a compositional bias: basic and acidic residues. Residues 1–21 (MTSRPADQDSVRSSASVPLYP) are disordered. Over 1–66 (MTSRPADQDS…RRRRTRCVGL (66 aa)) the chain is Intravirion. Residues 20–23 (YPAA) carry the Internalization motif motif. The interval 29-38 (EAYYSESEDE) is acidic. A phosphoserine; by host CK2 mark is found at serine 33 and serine 35. Residues 67–87 (VIACLVVALLSGGFGALLVWL) form a helical; Signal-anchor for type II membrane protein membrane-spanning segment. Over 88–89 (LR) the chain is Virion surface.

Belongs to the alphaherpesvirinae envelope protein US9 family. Post-translationally, phosphorylated on serines within the acidic cluster, possibly by host CK2. Phosphorylation determines whether endocytosed viral US9 traffics to the trans-Golgi network or recycles to the cell membrane.

The protein localises to the virion membrane. It is found in the host Golgi apparatus membrane. The protein resides in the host smooth endoplasmic reticulum membrane. Its subcellular location is the host cell membrane. Essential for the anterograde spread of the infection throughout the host nervous system. Together with the gE/gI heterodimer, US9 is involved in the sorting and transport of viral structural components toward axon tips. The chain is Envelope protein US9 from Homo sapiens (Human).